The following is a 102-amino-acid chain: Small ribosomal subunit protein uS10 (102 aa).

This sequence belongs to the universal ribosomal protein uS10 family. As to quaternary structure, part of the 30S ribosomal subunit.

Functionally, involved in the binding of tRNA to the ribosomes. The sequence is that of Small ribosomal subunit protein uS10 from Methylobacterium nodulans (strain LMG 21967 / CNCM I-2342 / ORS 2060).